Reading from the N-terminus, the 264-residue chain is Small ribosomal subunit protein eS1 (264 aa).

The segment covering 236 to 255 (GEGGSGKRGEAGDKSERPEG) has biased composition (basic and acidic residues). The segment at 236 to 264 (GEGGSGKRGEAGDKSERPEGYEPPVQESV) is disordered.

It belongs to the eukaryotic ribosomal protein eS1 family. In terms of assembly, component of the small ribosomal subunit. Mature ribosomes consist of a small (40S) and a large (60S) subunit. The 40S subunit contains about 33 different proteins and 1 molecule of RNA (18S). The 60S subunit contains about 49 different proteins and 3 molecules of RNA (28S, 5.8S and 5S).

It localises to the cytoplasm. This is Small ribosomal subunit protein eS1 from Spodoptera frugiperda (Fall armyworm).